The primary structure comprises 311 residues: 4-hydroxy-3-methylbut-2-enyl diphosphate reductase (311 aa).

C12 is a [4Fe-4S] cluster binding site. (2E)-4-hydroxy-3-methylbut-2-enyl diphosphate is bound by residues H41 and H74. Residues H41 and H74 each contribute to the dimethylallyl diphosphate site. Isopentenyl diphosphate is bound by residues H41 and H74. C96 lines the [4Fe-4S] cluster pocket. H124 is a (2E)-4-hydroxy-3-methylbut-2-enyl diphosphate binding site. Residue H124 coordinates dimethylallyl diphosphate. Residue H124 coordinates isopentenyl diphosphate. Residue E126 is the Proton donor of the active site. T168 is a (2E)-4-hydroxy-3-methylbut-2-enyl diphosphate binding site. Residue C198 participates in [4Fe-4S] cluster binding. Residues S226, S227, N228, and S270 each coordinate (2E)-4-hydroxy-3-methylbut-2-enyl diphosphate. S226, S227, N228, and S270 together coordinate dimethylallyl diphosphate. Residues S226, S227, N228, and S270 each coordinate isopentenyl diphosphate.

It belongs to the IspH family. [4Fe-4S] cluster is required as a cofactor.

It catalyses the reaction isopentenyl diphosphate + 2 oxidized [2Fe-2S]-[ferredoxin] + H2O = (2E)-4-hydroxy-3-methylbut-2-enyl diphosphate + 2 reduced [2Fe-2S]-[ferredoxin] + 2 H(+). The catalysed reaction is dimethylallyl diphosphate + 2 oxidized [2Fe-2S]-[ferredoxin] + H2O = (2E)-4-hydroxy-3-methylbut-2-enyl diphosphate + 2 reduced [2Fe-2S]-[ferredoxin] + 2 H(+). It participates in isoprenoid biosynthesis; dimethylallyl diphosphate biosynthesis; dimethylallyl diphosphate from (2E)-4-hydroxy-3-methylbutenyl diphosphate: step 1/1. It functions in the pathway isoprenoid biosynthesis; isopentenyl diphosphate biosynthesis via DXP pathway; isopentenyl diphosphate from 1-deoxy-D-xylulose 5-phosphate: step 6/6. Catalyzes the conversion of 1-hydroxy-2-methyl-2-(E)-butenyl 4-diphosphate (HMBPP) into a mixture of isopentenyl diphosphate (IPP) and dimethylallyl diphosphate (DMAPP). Acts in the terminal step of the DOXP/MEP pathway for isoprenoid precursor biosynthesis. The sequence is that of 4-hydroxy-3-methylbut-2-enyl diphosphate reductase from Alcanivorax borkumensis (strain ATCC 700651 / DSM 11573 / NCIMB 13689 / SK2).